Consider the following 352-residue polypeptide: Ion-translocating oxidoreductase complex subunit D (352 aa).

5 consecutive transmembrane segments (helical) span residues 20–40 (IMLL…WFFG), 42–62 (GTLV…ALVL), 78–109 (ALLT…VIIA), 123–143 (PAMI…TSWL), and 148–168 (IAVN…GHTA). At T187 the chain carries FMN phosphoryl threonine. A run of 4 helical transmembrane segments spans residues 214–234 (ILAG…GVWL), 242–262 (WHIP…GWLF), 267–287 (LAAP…FFIL), and 301–318 (LMFG…RSFG).

Belongs to the NqrB/RnfD family. As to quaternary structure, the complex is composed of six subunits: RsxA, RsxB, RsxC, RsxD, RsxE and RsxG. FMN serves as cofactor.

Its subcellular location is the cell inner membrane. In terms of biological role, part of a membrane-bound complex that couples electron transfer with translocation of ions across the membrane. Required to maintain the reduced state of SoxR. This chain is Ion-translocating oxidoreductase complex subunit D, found in Shigella flexneri serotype 5b (strain 8401).